Reading from the N-terminus, the 525-residue chain is DNA damage-binding protein CMR1 (525 aa).

Disordered stretches follow at residues 38 to 86 and 212 to 233; these read AGIF…AESE and GILD…EYPD. Residues 53-62 show a composition bias toward basic residues; the sequence is TKKKPAPKRV. WD repeat units lie at residues 183–224, 241–281, 288–328, 339–379, 384–425, 448–491, and 494–525; these read ITRE…DQNE, PHTN…ATEA, SDDE…KANP, LSEK…TKHP, EHES…KDWK, GKWV…LAQL, and DVIT…CLWM. Residues 223–232 show a composition bias toward acidic residues; it reads NESDEEDEYP.

This sequence belongs to the WD repeat DDB2/WDR76 family.

Its function is as follows. DNA-binding protein that binds to both single- and double-stranded DNA. Binds preferentially to UV-damaged DNA. May be involved in DNA-metabolic processes. The sequence is that of DNA damage-binding protein CMR1 from Coccidioides immitis (strain RS) (Valley fever fungus).